The sequence spans 173 residues: Cyclic pyranopterin monophosphate synthase (173 aa).

Residues 75 to 77 (MCH) and 117 to 118 (ME) contribute to the substrate site. Asp132 is an active-site residue. Positions 152–173 (SGGKSGHYQRENSSVGGFANEQ) are disordered. Positions 162-173 (ENSSVGGFANEQ) are enriched in polar residues.

The protein belongs to the MoaC family. Homohexamer; trimer of dimers.

The enzyme catalyses (8S)-3',8-cyclo-7,8-dihydroguanosine 5'-triphosphate = cyclic pyranopterin phosphate + diphosphate. The protein operates within cofactor biosynthesis; molybdopterin biosynthesis. Catalyzes the conversion of (8S)-3',8-cyclo-7,8-dihydroguanosine 5'-triphosphate to cyclic pyranopterin monophosphate (cPMP). The sequence is that of Cyclic pyranopterin monophosphate synthase from Geobacillus sp. (strain WCH70).